Reading from the N-terminus, the 178-residue chain is Ribosome maturation factor RimP (178 aa).

This sequence belongs to the RimP family.

It is found in the cytoplasm. In terms of biological role, required for maturation of 30S ribosomal subunits. This is Ribosome maturation factor RimP from Mycobacterium avium (strain 104).